Consider the following 366-residue polypeptide: Anhydro-N-acetylmuramic acid kinase (366 aa).

Residue 10-17 participates in ATP binding; that stretch reads GTSMDGID.

Belongs to the anhydro-N-acetylmuramic acid kinase family.

It carries out the reaction 1,6-anhydro-N-acetyl-beta-muramate + ATP + H2O = N-acetyl-D-muramate 6-phosphate + ADP + H(+). The protein operates within amino-sugar metabolism; 1,6-anhydro-N-acetylmuramate degradation. Its pathway is cell wall biogenesis; peptidoglycan recycling. Functionally, catalyzes the specific phosphorylation of 1,6-anhydro-N-acetylmuramic acid (anhMurNAc) with the simultaneous cleavage of the 1,6-anhydro ring, generating MurNAc-6-P. Is required for the utilization of anhMurNAc either imported from the medium or derived from its own cell wall murein, and thus plays a role in cell wall recycling. This Legionella pneumophila (strain Corby) protein is Anhydro-N-acetylmuramic acid kinase.